The primary structure comprises 310 residues: Homoserine O-acetyltransferase (310 aa).

The active-site Acyl-thioester intermediate is cysteine 142. 2 residues coordinate substrate: lysine 163 and serine 192. The active-site Proton acceptor is the histidine 235. The active site involves glutamate 237. A substrate-binding site is contributed by arginine 249.

This sequence belongs to the MetA family.

The protein resides in the cytoplasm. The enzyme catalyses L-homoserine + acetyl-CoA = O-acetyl-L-homoserine + CoA. It participates in amino-acid biosynthesis; L-methionine biosynthesis via de novo pathway; O-acetyl-L-homoserine from L-homoserine: step 1/1. Its function is as follows. Transfers an acetyl group from acetyl-CoA to L-homoserine, forming acetyl-L-homoserine. This is Homoserine O-acetyltransferase from Parabacteroides distasonis (strain ATCC 8503 / DSM 20701 / CIP 104284 / JCM 5825 / NCTC 11152).